A 279-amino-acid chain; its full sequence is Bifunctional protein FolD (279 aa).

Residues 162–164 (GRS), Ser-187, and Ile-228 contribute to the NADP(+) site.

Belongs to the tetrahydrofolate dehydrogenase/cyclohydrolase family. In terms of assembly, homodimer.

The enzyme catalyses (6R)-5,10-methylene-5,6,7,8-tetrahydrofolate + NADP(+) = (6R)-5,10-methenyltetrahydrofolate + NADPH. It catalyses the reaction (6R)-5,10-methenyltetrahydrofolate + H2O = (6R)-10-formyltetrahydrofolate + H(+). It participates in one-carbon metabolism; tetrahydrofolate interconversion. Catalyzes the oxidation of 5,10-methylenetetrahydrofolate to 5,10-methenyltetrahydrofolate and then the hydrolysis of 5,10-methenyltetrahydrofolate to 10-formyltetrahydrofolate. The chain is Bifunctional protein FolD from Acidiphilium cryptum (strain JF-5).